A 1217-amino-acid polypeptide reads, in one-letter code: Splicing factor 3B subunit 3 (1217 aa).

Interaction with PHF5A, SF3B1 and SF3B5 stretches follow at residues 105–119 (ETFG…VPGQ) and 145–168 (NRDA…TLVY). S156 is modified (phosphoserine). Interaction with SF3B1 and SF3B5 regions lie at residues 193-231 (DNDP…LEEH) and 786-804 (RKFV…ETDH). The tract at residues 1028 to 1049 (TYPRWVTTASLLDYDTVAGADK) is interaction with SF3B1. Residues 1100–1123 (TVLSLQKTTLIPGGSESLVYTTLS) form an interaction with SF3B5 region. At T1200 the chain carries Phosphothreonine.

The protein belongs to the RSE1 family. As to quaternary structure, component of the 17S U2 SnRNP complex, a ribonucleoprotein complex that contains small nuclear RNA (snRNA) U2 and a number of specific proteins. Part of the SF3B subcomplex of the 17S U2 SnRNP complex. SF3B associates with the splicing subcomplex SF3A and a 12S RNA unit to form the U2 small nuclear ribonucleoproteins complex (U2 snRNP). Within the SF3B subcomplex, interacts directly with SF3B1 (via HEAT domain), SF3B5 and PHF5A. Identified in the spliceosome A complex; remains associated with the spliceosome throughout the splicing process. Component of the spliceosome B complex. Identified in the spliceosome C complex. Identified in the spliceosome E complex. Component of the minor (U12-type spliceosome) spliceosome. Within this complex, interacts with SCNM1. Associates with the STAGA transcription coactivator-HAT complex. Interacts with SUPT3H. Interacts with TAF3.

The protein localises to the nucleus. Functionally, component of the 17S U2 SnRNP complex of the spliceosome, a large ribonucleoprotein complex that removes introns from transcribed pre-mRNAs. The 17S U2 SnRNP complex (1) directly participates in early spliceosome assembly and (2) mediates recognition of the intron branch site during pre-mRNA splicing by promoting the selection of the pre-mRNA branch-site adenosine, the nucleophile for the first step of splicing. Within the 17S U2 SnRNP complex, SF3B3 is part of the SF3B subcomplex, which is required for 'A' complex assembly formed by the stable binding of U2 snRNP to the branchpoint sequence in pre-mRNA. Sequence independent binding of SF3A and SF3B subcomplexes upstream of the branch site is essential, it may anchor U2 snRNP to the pre-mRNA. May also be involved in the assembly of the 'E' complex. Also acts as a component of the minor spliceosome, which is involved in the splicing of U12-type introns in pre-mRNAs. This is Splicing factor 3B subunit 3 (SF3B3) from Bos taurus (Bovine).